Consider the following 486-residue polypeptide: MVMQFQGLENPIQISPHCSCTPSGFFMEMMSMKPAKGVLTEQVAGPLGQNLEVEPYSQYSNVQFPQVQPQISSSSYYSNLGFYPQQPEEWYSPGIYELRRMPAETLYQGETEVAEMPVTKKPRMGASAGRIKGDELCVVCGDRASGYHYNALTCEGCKGFFRRSITKNAVYKCKNGGNCVMDMYMRRKCQECRLRKCKEMGMLAECMYTGLLTEIQCKSKRLRKNVKQHADQTVNEDSEGRDLRQVTSTTKSCREKTELTPDQQTLLHFIMDSYNKQRMPQEITNKILKEEFSAEENFLILTEMATNHVQVLVEFTKKLPGFQTLDHEDQIALLKGSAVEAMFLRSAEIFNKKLPSGHSDLLEERIRNSGISDEYITPMFSFYKSIGELKMTQEEYALLTAIVILSPDRQYIKDREAVEKLQEPLLDVLQKLCKIHQPENPQHFACLLGRLTELRTFNHHHAEMLMSWRVNDHKFTPLLCEIWDVQ.

Lys132 is covalently cross-linked (Glycyl lysine isopeptide (Lys-Gly) (interchain with G-Cter in SUMO1)). The segment at residues 134 to 209 (DELCVVCGDR…MGMLAECMYT (76 aa)) is a DNA-binding region (nuclear receptor). The segment at 137–157 (CVVCGDRASGYHYNALTCEGC) adopts an NR C4-type zinc-finger fold. Residues Ser145 and Ser164 each carry the phosphoserine; by PKC/PRKCA modification. An N6-acetyllysine; by EP300 modification is found at Lys167. The NR C4-type zinc finger occupies 173-197 (CKNGGNCVMDMYMRRKCQECRLRKC). Residue Lys220 is modified to N6-methyllysine; by SETD7. Lys227 carries the N6-acetyllysine; by EP300 modification. An NR LBD domain is found at 262–486 (DQQTLLHFIM…PLLCEIWDVQ (225 aa)). Lys289 is covalently cross-linked (Glycyl lysine isopeptide (Lys-Gly) (interchain with G-Cter in SUMO1)). Chenodeoxycholate is bound by residues Arg345, Tyr375, and Tyr383. Thr456 carries the phosphothreonine; by PKC/PRKCZ modification. Residue His461 coordinates chenodeoxycholate.

Belongs to the nuclear hormone receptor family. NR1 subfamily. As to quaternary structure, heterodimer (via C-terminus) with RXRA (via DBD); the heterodimerization enhances the binding affinity for LXXLL motifs from coactivators. Binds DNA predominantly as a heterodimer with RXRA. After activation by agonist binding interacts with coactivators. Interacts with NCOA1, NCOA2, PPARGC1A, CARM1, SETD7, PRMT1, GPS2, SMARCA4 and MED1. Interacts with EP300 and SMARCD1. Interacts with XRCC5 and XRCC6; decreasing NR1H4/FXR transactivation activity towards ABCB11/BSEP. Interacts with PAGR1 and NCOA6; indicative for an association with an MLL2/MLL3 complex (ASCOM). Acetylated by EP300. Lys-227 as is the major acetylation site for EP300; the dynamicly regulated acetylation inhibits heterodimerization with RXRA and transactivation activity. Deacetylated by SIRT1. Post-translationally, methylation may increase transactivation of target genes. In terms of processing, phosphorylation by PKC/PRKCA increases transactivation activity by promoting association with PPARGC1A. Sumoylated upon ligand binding. Liver and hepatocyte-related cells express mainly FXRalpha1-type isoforms with isoform 3 and isoform 4 in approximately equal proportions. In intestine and kidney mainly FXRalpha2-type isoforms are expressed with isoform 1 and isoform 2 in approximately equal proportions. Expressed in pancreatic beta cells and macrophages.

It localises to the nucleus. In terms of biological role, ligand-activated transcription factor. Receptor for bile acids (BAs) such as chenodeoxycholic acid (CDCA), lithocholic acid, deoxycholic acid (DCA) and allocholic acid (ACA). Plays a essential role in BA homeostasis through the regulation of genes involved in BA synthesis, conjugation and enterohepatic circulation. Also regulates lipid and glucose homeostasis and is involved innate immune response. The FXR-RXR heterodimer binds predominantly to farnesoid X receptor response elements (FXREs) containing two inverted repeats of the consensus sequence 5'-AGGTCA-3' in which the monomers are spaced by 1 nucleotide (IR-1) but also to tandem repeat DR1 sites with lower affinity, and can be activated by either FXR or RXR-specific ligands. It is proposed that monomeric nuclear receptors such as NR5A2/LRH-1 bound to coregulatory nuclear responsive element (NRE) halfsites located in close proximity to FXREs modulate transcriptional activity. In the liver activates transcription of the corepressor NR0B2 thereby indirectly inhibiting CYP7A1 and CYP8B1 (involved in BA synthesis) implicating at least in part histone demethylase KDM1A resulting in epigenomic repression, and SLC10A1/NTCP (involved in hepatic uptake of conjugated BAs). Activates transcription of the repressor MAFG (involved in regulation of BA synthesis). Activates transcription of SLC27A5/BACS and BAAT (involved in BA conjugation), ABCB11/BSEP (involved in bile salt export) by directly recruiting histone methyltransferase CARM1, and ABCC2/MRP2 (involved in secretion of conjugated BAs) and ABCB4 (involved in secretion of phosphatidylcholine in the small intestine). Activates transcription of SLC27A5/BACS and BAAT (involved in BA conjugation), ABCB11/BSEP (involved in bile salt export) by directly recruiting histone methyltransferase CARM1, and ABCC2/MRP2 (involved in secretion of conjugated BAs) and ABCB4 (involved in secretion of phosphatidylcholine in the small intestine). In the intestine activates FGF19 expression and secretion leading to hepatic CYP7A1 repression. The function also involves the coordinated induction of hepatic KLB/beta-klotho expression. Regulates transcription of liver UGT2B4 and SULT2A1 involved in BA detoxification; binding to the UGT2B4 promoter seems to imply a monomeric transactivation independent of RXRA. Modulates lipid homeostasis by activating liver NR0B2/SHP-mediated repression of SREBF1 (involved in de novo lipogenesis), expression of PLTP (involved in HDL formation), SCARB1 (involved in HDL hepatic uptake), APOE, APOC1, APOC4, PPARA (involved in beta-oxidation of fatty acids), VLDLR and SDC1 (involved in the hepatic uptake of LDL and IDL remnants), and inhibiting expression of MTTP (involved in VLDL assembly. Increases expression of APOC2 (promoting lipoprotein lipase activity implicated in triglyceride clearance). Transrepresses APOA1 involving a monomeric competition with NR2A1 for binding to a DR1 element. Also reduces triglyceride clearance by inhibiting expression of ANGPTL3 and APOC3 (both involved in inhibition of lipoprotein lipase). Involved in glucose homeostasis by modulating hepatic gluconeogenesis through activation of NR0B2/SHP-mediated repression of respective genes. Modulates glycogen synthesis (inducing phosphorylation of glycogen synthase kinase-3). Modulates glucose-stimulated insulin secretion and is involved in insulin resistance. Involved in intestinal innate immunity. Plays a role in protecting the distal small intestine against bacterial overgrowth and preservation of the epithelial barrier. Down-regulates inflammatory cytokine expression in several types of immune cells including macrophages and mononuclear cells. Mediates trans-repression of TLR4-induced cytokine expression; the function seems to require its sumoylation and prevents N-CoR nuclear receptor corepressor clearance from target genes such as IL1B and NOS2. Involved in the TLR9-mediated protective mechanism in intestinal inflammation. Plays an anti-inflammatory role in liver inflammation; proposed to inhibit pro-inflammatory (but not antiapoptotic) NF-kappa-B signaling). Promotes transcriptional activation of target genes NR0B2/SHP (inducible by unconjugated CDCA), SLC51B/OSTB (inducible by unconjugated CDCA and DCA) and FABP6/IBAP; low activity for ABCB11/BSEP (inducible by unconjugated CDCA, DCA and ACA); not inducible by taurine- and glycine-amidated CDCA. Its function is as follows. Promotes transcriptional activation of target genes ABCB11/BSEP (inducible by unconjugated CDCA, DCA and ACA), NR0B2/SHP (inducible by unconjugated CDCA DCA and ACA), SLC51B/OSTB (inducible by unconjugated CDCA and DCA) and FABP6/IBAP; not inducible by taurine- and glycine-amidated CDCA. Functionally, promotes transcriptional activation of target genes NR0B2/SHP (inducible by unconjugated CDCA), SLC51B/OSTB (inducible by unconjugated CDCA and DCA) and IBAP; low activity for ABCB11/BSEP (inducible by unconjugated CDCA, DCA and ACA); not inducible by taurine- and glycine-amidated CDCA. In terms of biological role, promotes transcriptional activation of target genes ABCB11/BSEP (inducible by unconjugated CDCA, ACA and DCA), NR0B2/SHP (inducible by unconjugated CDCA, ACA and DCA), SLC51B/OSTB (inducible by unconjugated CDCA and DCA) and FABP6/IBAP; most efficient isoform compared to isoforms 1 to 3; not inducible by taurine- and glycine-amidated CDCA. In Homo sapiens (Human), this protein is Bile acid receptor (NR1H4).